The primary structure comprises 322 residues: Formimidoylglutamase (322 aa).

Mn(2+)-binding residues include His-130, Asp-156, His-158, Asp-160, Cys-244, and Asp-246.

It belongs to the arginase family. It depends on Mn(2+) as a cofactor.

It carries out the reaction N-formimidoyl-L-glutamate + H2O = formamide + L-glutamate. It functions in the pathway amino-acid degradation; L-histidine degradation into L-glutamate; L-glutamate from N-formimidoyl-L-glutamate (hydrolase route): step 1/1. Its function is as follows. Catalyzes the conversion of N-formimidoyl-L-glutamate to L-glutamate and formamide. This chain is Formimidoylglutamase, found in Geobacillus thermodenitrificans (strain NG80-2).